The primary structure comprises 407 residues: Endo-1,4-beta-xylanase D (407 aa).

The first 19 residues, 1–19 (MTLVKSILLALAAGHVAQA), serve as a signal peptide directing secretion. The 314-residue stretch at 20 to 333 (QLNTAAKAAG…KPAYYGILAG (314 aa)) folds into the GH10 domain. A glycan (N-linked (GlcNAc...) asparagine) is linked at asparagine 118. The active-site Proton donor is glutamate 148. The active-site Nucleophile is the glutamate 255. An intrachain disulfide couples cysteine 283 to cysteine 289. The interval 337–364 (GSGSSSSTSSTTLITTTTPTASSSTTSA) is disordered. A CBM1 domain is found at 371–407 (SGAAHWGQCGGIGWSGPTICVSPYTCQVLNPYYSQCL).

It belongs to the glycosyl hydrolase 10 (cellulase F) family.

The protein resides in the secreted. It catalyses the reaction Endohydrolysis of (1-&gt;4)-beta-D-xylosidic linkages in xylans.. Its pathway is glycan degradation; xylan degradation. Inhibited by wheat xylanase inhibiting protein I (XIP-I). Endo-1,4-beta-xylanase involved in the hydrolysis of xylan, a major structural heterogeneous polysaccharide found in plant biomass representing the second most abundant polysaccharide in the biosphere, after cellulose. Shows an endo-mode of action on xylan forming mainly xylobiose and short-chain xylooligosaccharides (XOS). This chain is Endo-1,4-beta-xylanase D (xynD), found in Talaromyces funiculosus (Fruitlet core rot fungus).